Reading from the N-terminus, the 294-residue chain is 4-hydroxy-tetrahydrodipicolinate synthase (294 aa).

Thr47 contributes to the pyruvate binding site. Tyr136 (proton donor/acceptor) is an active-site residue. The active-site Schiff-base intermediate with substrate is Lys164. Position 206 (Val206) interacts with pyruvate.

It belongs to the DapA family. In terms of assembly, homotetramer; dimer of dimers.

The protein resides in the cytoplasm. It catalyses the reaction L-aspartate 4-semialdehyde + pyruvate = (2S,4S)-4-hydroxy-2,3,4,5-tetrahydrodipicolinate + H2O + H(+). It participates in amino-acid biosynthesis; L-lysine biosynthesis via DAP pathway; (S)-tetrahydrodipicolinate from L-aspartate: step 3/4. Its function is as follows. Catalyzes the condensation of (S)-aspartate-beta-semialdehyde [(S)-ASA] and pyruvate to 4-hydroxy-tetrahydrodipicolinate (HTPA). The sequence is that of 4-hydroxy-tetrahydrodipicolinate synthase from Cyanothece sp. (strain PCC 7425 / ATCC 29141).